Consider the following 244-residue polypeptide: uncharacterized protein (244 aa).

This is an uncharacterized protein from Saccharomyces cerevisiae (strain ATCC 204508 / S288c) (Baker's yeast).